Consider the following 620-residue polypeptide: E3 ubiquitin-protein ligase DTX1 (620 aa).

2 consecutive WWE domains span residues 14–94 and 95–171; these read GLGF…PVRR and NFYD…RLRR. 3 disordered regions span residues 221 to 248, 262 to 313, and 361 to 391; these read SQRR…LAVR, PAAG…SIPP, and PPVS…KSKN. Pro residues-rich tracts occupy residues 227–241 and 268–280; these read PPAP…PGGP and EPAP…PRSP. Residues 230 to 233 carry the SH3-binding motif; the sequence is PPLP. Polar residues predominate over residues 291–307; it reads QNNLNRPGPQRTTSVSA. The span at 379–389 shows a compositional bias: basic residues; it reads RKTKKKHLKKS. An RING-type zinc finger spans residues 411–472; the sequence is CTICMERLVT…DGSLQCPTCK (62 aa).

This sequence belongs to the Deltex family. As to quaternary structure, homodimer. May form a heterodimer with other members of the Deltex family. Interacts with NOTCH1 via its N-terminal region and EIF3F, the interaction is required for NOTCH1 deubiquitination. Interacts with EP300. Forms a heterodimer with BBAP; the heterodimerization leading to an increase of in vitro ubiquitin ligase activity. Interacts with ITCH. In terms of processing, ubiquitinated; undergoes 'Lys-29'-linked polyubiquitination catalyzed by ITCH. As to expression, widely expressed. Strongly expressed in blood vessel. Also expressed in embryonic nervous system, pancreas, lung, adrenal gland, digestive tube and muscles. Expressed in MZB cells and developing B- and T-cells.

It localises to the cytoplasm. The protein resides in the nucleus. It catalyses the reaction S-ubiquitinyl-[E2 ubiquitin-conjugating enzyme]-L-cysteine + [acceptor protein]-L-lysine = [E2 ubiquitin-conjugating enzyme]-L-cysteine + N(6)-ubiquitinyl-[acceptor protein]-L-lysine.. It functions in the pathway protein modification; protein ubiquitination. Its function is as follows. Functions as a ubiquitin ligase protein in vivo, mediating ubiquitination and promoting degradation of MEKK1, suggesting that it may regulate the Notch pathway via some ubiquitin ligase activity. Regulator of Notch signaling, a signaling pathway involved in cell-cell communications that regulates a broad spectrum of cell-fate determinations. Mainly acts as a positive regulator of Notch, but it also acts as a negative regulator, depending on the developmental and cell context. Mediates the antineural activity of Notch, possibly by inhibiting the transcriptional activation mediated by MATCH1. Involved in neurogenesis, lymphogenesis and myogenesis, and may also be involved in MZB (Marginal zone B) cell differentiation. Promotes B-cell development at the expense of T-cell development, suggesting that it can antagonize NOTCH1. This Homo sapiens (Human) protein is E3 ubiquitin-protein ligase DTX1 (DTX1).